The following is a 315-amino-acid chain: Ribosomal protein L11 methyltransferase (315 aa).

S-adenosyl-L-methionine is bound by residues Thr-162, Gly-183, Asp-205, and Asn-248.

It belongs to the methyltransferase superfamily. PrmA family.

It is found in the cytoplasm. The catalysed reaction is L-lysyl-[protein] + 3 S-adenosyl-L-methionine = N(6),N(6),N(6)-trimethyl-L-lysyl-[protein] + 3 S-adenosyl-L-homocysteine + 3 H(+). Its function is as follows. Methylates ribosomal protein L11. The protein is Ribosomal protein L11 methyltransferase of Oceanobacillus iheyensis (strain DSM 14371 / CIP 107618 / JCM 11309 / KCTC 3954 / HTE831).